Consider the following 548-residue polypeptide: Chaperonin GroEL 2 (548 aa).

Residues 30-33 (TLGP), Lys51, 87-91 (DGTTT), Gly415, and Asp496 each bind ATP. The interval 529-548 (KDAMPSPDMGGMGGMGGMGF) is disordered. Over residues 538–548 (GGMGGMGGMGF) the composition is skewed to gly residues.

Belongs to the chaperonin (HSP60) family. In terms of assembly, forms a cylinder of 14 subunits composed of two heptameric rings stacked back-to-back. Interacts with the co-chaperonin GroES.

The protein localises to the cytoplasm. It catalyses the reaction ATP + H2O + a folded polypeptide = ADP + phosphate + an unfolded polypeptide.. Functionally, together with its co-chaperonin GroES, plays an essential role in assisting protein folding. The GroEL-GroES system forms a nano-cage that allows encapsulation of the non-native substrate proteins and provides a physical environment optimized to promote and accelerate protein folding. The polypeptide is Chaperonin GroEL 2 (Rhodospirillum rubrum (strain ATCC 11170 / ATH 1.1.1 / DSM 467 / LMG 4362 / NCIMB 8255 / S1)).